The primary structure comprises 358 residues: tRNA-specific 2-thiouridylase MnmA (358 aa).

ATP is bound by residues 8 to 15 and Met35; that span reads AMSGGVDS. Residues 95–97 form an interaction with target base in tRNA region; that stretch reads NPD. The active-site Nucleophile is the Cys100. A disulfide bond links Cys100 and Cys194. Residue Gly124 coordinates ATP. The interaction with tRNA stretch occupies residues 144 to 146; sequence KDQ. Cys194 (cysteine persulfide intermediate) is an active-site residue. The tract at residues 301-302 is interaction with tRNA; sequence RY.

The protein belongs to the MnmA/TRMU family.

The protein localises to the cytoplasm. The catalysed reaction is S-sulfanyl-L-cysteinyl-[protein] + uridine(34) in tRNA + AH2 + ATP = 2-thiouridine(34) in tRNA + L-cysteinyl-[protein] + A + AMP + diphosphate + H(+). Functionally, catalyzes the 2-thiolation of uridine at the wobble position (U34) of tRNA, leading to the formation of s(2)U34. The sequence is that of tRNA-specific 2-thiouridylase MnmA from Chlamydia trachomatis serovar D (strain ATCC VR-885 / DSM 19411 / UW-3/Cx).